A 770-amino-acid chain; its full sequence is Coiled-coil alpha-helical rod protein 1 (770 aa).

Coiled coils occupy residues 56 to 289 (STVT…DLQA), 334 to 420 (LRNW…RQEQ), and 476 to 669 (GLMA…RKEE). 4 disordered regions span residues 573–592 (LEAA…SLRQ), 641–672 (LRQI…EGQR), 700–721 (NKKC…AASC), and 744–770 (SRDE…PLLS). Residues 648-672 (ATQEKERNQELRRLQDEARKEEGQR) show a composition bias toward basic and acidic residues. Low complexity predominate over residues 701-721 (KKCSPRSVESSSSESPAAASC).

Its subcellular location is the cytoplasm. The protein resides in the nucleus. In terms of biological role, may be a regulator of keratinocyte proliferation or differentiation. The polypeptide is Coiled-coil alpha-helical rod protein 1 (Cchcr1) (Mus musculus (Mouse)).